The following is a 309-amino-acid chain: Protein FdhE (309 aa).

It belongs to the FdhE family.

The protein localises to the cytoplasm. Functionally, necessary for formate dehydrogenase activity. This is Protein FdhE from Escherichia coli O127:H6 (strain E2348/69 / EPEC).